Here is a 530-residue protein sequence, read N- to C-terminus: MGDDSLYLGGEWQFNHFSKLTSSRPDAAFAEIQRTSLPEKSPLSSETRVDLCDDLAPVARQLAPREKLPLSSRRPAAVGAGLQNMGNTCYENASLQCLTYTLPLANYMLSREHSQTCQRPKCCMLCTMQAHITWALHSPGHVIQPSQALAAGFHRGKQEDVHEFLMFTVDAMKKACLPGHKQVDHHCKDTTLIHQIFGGCWRSQIKCLHCHGISDTFDPYLDIALDIQAAQSVKQALEQLVKPEELNGENAYHCGLCLQRAPASNTLTLHTSAKVLILVLKRFSDVAGNKLAKNVQYPECLDMQPYMSQQNTGPLVYVLYAVLVHAGWSCHDGHYFSYVKAQEVQWYKMDDAEVTVCSIISVLSQQAYVLFYIQKSEWERHSESVSRGREPRALGAEDTDRRAKQGELKRDHPCLQAPELDEHLVERATQESTLDHWKFLQEQNKTKPEFNVGKVEGTLPPNALVIHQSKYKCGMKNHHPEQQSSLLNLSSTTRTDQESMNTGTLASLQGRTRRAKGKNKHSKRALLVCQ.

The USP domain occupies 80 to 375 (AGLQNMGNTC…QAYVLFYIQK (296 aa)). The active-site Nucleophile is cysteine 89. Histidine 334 acts as the Proton acceptor in catalysis. Basic and acidic residues-rich tracts occupy residues 382 to 392 (SESVSRGREPR) and 398 to 411 (DTDR…LKRD). Residues 382-411 (SESVSRGREPRALGAEDTDRRAKQGELKRD) are disordered.

This sequence belongs to the peptidase C19 family. USP17 subfamily.

It localises to the nucleus. The protein localises to the endoplasmic reticulum. It carries out the reaction Thiol-dependent hydrolysis of ester, thioester, amide, peptide and isopeptide bonds formed by the C-terminal Gly of ubiquitin (a 76-residue protein attached to proteins as an intracellular targeting signal).. Functionally, deubiquitinating enzyme that removes conjugated ubiquitin from specific proteins to regulate different cellular processes that may include cell proliferation, progression through the cell cycle, apoptosis, cell migration, and the cellular response to viral infection. The chain is Ubiquitin carboxyl-terminal hydrolase 17-like protein 1 (USP17L1) from Homo sapiens (Human).